We begin with the raw amino-acid sequence, 430 residues long: Gamma-glutamyl phosphate reductase (430 aa).

It belongs to the gamma-glutamyl phosphate reductase family.

It is found in the cytoplasm. It catalyses the reaction L-glutamate 5-semialdehyde + phosphate + NADP(+) = L-glutamyl 5-phosphate + NADPH + H(+). Its pathway is amino-acid biosynthesis; L-proline biosynthesis; L-glutamate 5-semialdehyde from L-glutamate: step 2/2. Functionally, catalyzes the NADPH-dependent reduction of L-glutamate 5-phosphate into L-glutamate 5-semialdehyde and phosphate. The product spontaneously undergoes cyclization to form 1-pyrroline-5-carboxylate. This chain is Gamma-glutamyl phosphate reductase, found in Rhodopseudomonas palustris (strain ATCC BAA-98 / CGA009).